The sequence spans 221 residues: Interleukin-12 subunit alpha (221 aa).

Residues 1-25 (MCPLRSLLLISTLVLLHHLPHLSLG) form the signal peptide. 3 cysteine pairs are disulfide-bonded: Cys-39–Cys-112, Cys-66–Cys-198, and Cys-87–Cys-125. Asn-95 carries an N-linked (GlcNAc...) asparagine glycan.

It belongs to the IL-6 superfamily. In terms of assembly, heterodimer with IL12B; disulfide-linked. This heterodimer is known as interleukin IL-12. Heterodimer with EBI3/IL27B; not disulfide-linked. This heterodimer is known as interleukin IL-35. Interacts with NBR1; this interaction promotes IL-12 secretion.

It is found in the secreted. Its function is as follows. Heterodimerizes with IL12B to form the IL-12 cytokine or with EBI3/IL27B to form the IL-35 cytokine. IL-12 is primarily produced by professional antigen-presenting cells (APCs) such as B-cells and dendritic cells (DCs) as well as macrophages and granulocytes and regulates T-cell and natural killer-cell responses, induces the production of interferon-gamma (IFN-gamma), favors the differentiation of T-helper 1 (Th1) cells and is an important link between innate resistance and adaptive immunity. Mechanistically, exerts its biological effects through a receptor composed of IL12R1 and IL12R2 subunits. Binding to the receptor results in the rapid tyrosine phosphorylation of a number of cellular substrates including the JAK family kinases TYK2 and JAK2. In turn, recruited STAT4 gets phosphorylated and translocates to the nucleus where it regulates cytokine/growth factor responsive genes. As part of IL-35, plays essential roles in maintaining the immune homeostasis of the liver microenvironment and also functions as an immune-suppressive cytokine. Mediates biological events through unconventional receptors composed of IL12RB2 and gp130/IL6ST heterodimers or homodimers. Signaling requires the transcription factors STAT1 and STAT4, which form a unique heterodimer that binds to distinct DNA sites. The protein is Interleukin-12 subunit alpha (IL12A) of Ovis aries (Sheep).